A 379-amino-acid polypeptide reads, in one-letter code: Cytochrome b (379 aa).

The next 4 helical transmembrane spans lie at 34–54 (FGSL…LLAM), 78–99 (WLIR…YLHI), 114–134 (WNTG…GYVL), and 179–199 (FFAL…IHLT). Histidine 84 and histidine 98 together coordinate heme b. Positions 183 and 197 each coordinate heme b. Histidine 202 serves as a coordination point for a ubiquinone. The next 4 membrane-spanning stretches (helical) occupy residues 227–247 (LKDA…AFFS), 289–309 (LGGV…PFLH), 321–341 (LSQI…WIGS), and 348–368 (FIII…VLFP).

The protein belongs to the cytochrome b family. The cytochrome bc1 complex contains 11 subunits: 3 respiratory subunits (MT-CYB, CYC1 and UQCRFS1), 2 core proteins (UQCRC1 and UQCRC2) and 6 low-molecular weight proteins (UQCRH/QCR6, UQCRB/QCR7, UQCRQ/QCR8, UQCR10/QCR9, UQCR11/QCR10 and a cleavage product of UQCRFS1). This cytochrome bc1 complex then forms a dimer. It depends on heme b as a cofactor.

It localises to the mitochondrion inner membrane. In terms of biological role, component of the ubiquinol-cytochrome c reductase complex (complex III or cytochrome b-c1 complex) that is part of the mitochondrial respiratory chain. The b-c1 complex mediates electron transfer from ubiquinol to cytochrome c. Contributes to the generation of a proton gradient across the mitochondrial membrane that is then used for ATP synthesis. The sequence is that of Cytochrome b (MT-CYB) from Rhea americana (Greater rhea).